The chain runs to 730 residues: Catalase R (730 aa).

The active site involves His-105. Heme is bound at residue Tyr-392. Positions Pro-403–Asn-433 are disordered.

The protein belongs to the catalase family. It depends on heme as a cofactor.

The enzyme catalyses 2 H2O2 = O2 + 2 H2O. Its function is as follows. Occurs in almost all aerobically respiring organisms and serves to protect cells from the toxic effects of hydrogen peroxide. The chain is Catalase R (catR) from Aspergillus niger.